Here is a 727-residue protein sequence, read N- to C-terminus: Polyphosphate kinase (727 aa).

Residue Asn-82 participates in ATP binding. 2 residues coordinate Mg(2+): Arg-412 and Arg-442. His-472 serves as the catalytic Phosphohistidine intermediate. The ATP site is built by Tyr-505, Arg-601, and His-629.

It belongs to the polyphosphate kinase 1 (PPK1) family. Mg(2+) is required as a cofactor. In terms of processing, an intermediate of this reaction is the autophosphorylated ppk in which a phosphate is covalently linked to a histidine residue through a N-P bond.

The enzyme catalyses [phosphate](n) + ATP = [phosphate](n+1) + ADP. In terms of biological role, catalyzes the reversible transfer of the terminal phosphate of ATP to form a long-chain polyphosphate (polyP). The polypeptide is Polyphosphate kinase (Pseudomonas putida (strain ATCC 47054 / DSM 6125 / CFBP 8728 / NCIMB 11950 / KT2440)).